We begin with the raw amino-acid sequence, 295 residues long: Keratin-like protein KRT222 (295 aa).

The 150-residue stretch at 1 to 150 (MELSQLLNEI…HLLEKEEIRY (150 aa)) folds into the IF rod domain. The stretch at 2–150 (ELSQLLNEIR…HLLEKEEIRY (149 aa)) forms a coiled coil.

It belongs to the intermediate filament family.

In Homo sapiens (Human), this protein is Keratin-like protein KRT222 (KRT222).